The chain runs to 116 residues: Large ribosomal subunit protein bL19 (116 aa).

It belongs to the bacterial ribosomal protein bL19 family.

Functionally, this protein is located at the 30S-50S ribosomal subunit interface and may play a role in the structure and function of the aminoacyl-tRNA binding site. The polypeptide is Large ribosomal subunit protein bL19 (Haemophilus ducreyi (strain 35000HP / ATCC 700724)).